The chain runs to 845 residues: Protein P (845 aa).

The tract at residues 1-179 is terminal protein domain (TP); it reads MPLSYQHFRK…FCGSPYSWEQ (179 aa). The tract at residues 180 to 348 is spacer; the sequence is ELQHGRLVIK…YCLSHLVNLR (169 aa). The tract at residues 226–246 is disordered; sequence GLQPHQGPLASSQPGRSGSIR. Positions 349–692 are polymerase/reverse transcriptase domain (RT); it reads EDRGPCDEHG…YMNLYPVARQ (344 aa). Positions 359–602 constitute a Reverse transcriptase domain; the sequence is EHHIRIPRTP…YSLNFMGYVI (244 aa). Mg(2+) is bound by residues Asp431, Asp553, and Asp554.

Belongs to the hepadnaviridae P protein family.

It catalyses the reaction DNA(n) + a 2'-deoxyribonucleoside 5'-triphosphate = DNA(n+1) + diphosphate. The enzyme catalyses Endonucleolytic cleavage to 5'-phosphomonoester.. Activated by host HSP70 and HSP40 in vitro to be able to bind the epsilon loop of the pgRNA. Because deletion of the RNase H region renders the protein partly chaperone-independent, the chaperones may be needed indirectly to relieve occlusion of the RNA-binding site by this domain. Inhibited by several reverse-transcriptase inhibitors: Lamivudine, Adefovir and Entecavir. In terms of biological role, multifunctional enzyme that converts the viral RNA genome into dsDNA in viral cytoplasmic capsids. This enzyme displays a DNA polymerase activity that can copy either DNA or RNA templates, and a ribonuclease H (RNase H) activity that cleaves the RNA strand of RNA-DNA heteroduplexes in a partially processive 3'- to 5'-endonucleasic mode. Neo-synthesized pregenomic RNA (pgRNA) are encapsidated together with the P protein, and reverse-transcribed inside the nucleocapsid. Initiation of reverse-transcription occurs first by binding the epsilon loop on the pgRNA genome, and is initiated by protein priming, thereby the 5'-end of (-)DNA is covalently linked to P protein. Partial (+)DNA is synthesized from the (-)DNA template and generates the relaxed circular DNA (RC-DNA) genome. After budding and infection, the RC-DNA migrates in the nucleus, and is converted into a plasmid-like covalently closed circular DNA (cccDNA). The activity of P protein does not seem to be necessary for cccDNA generation, and is presumably released from (+)DNA by host nuclear DNA repair machinery. The polypeptide is Protein P (Hepatitis B virus genotype A2 subtype adw2 (isolate Germany/991/1990) (HBV-A)).